The following is a 597-amino-acid chain: Elongation factor 4 (597 aa).

In terms of domain architecture, tr-type G spans 2–184; it reads KNIRNFSIIA…TMIAKIPPPV (183 aa). GTP is bound by residues 14–19 and 131–134; these read DHGKST and NKID.

It belongs to the TRAFAC class translation factor GTPase superfamily. Classic translation factor GTPase family. LepA subfamily.

It localises to the cell inner membrane. The catalysed reaction is GTP + H2O = GDP + phosphate + H(+). Required for accurate and efficient protein synthesis under certain stress conditions. May act as a fidelity factor of the translation reaction, by catalyzing a one-codon backward translocation of tRNAs on improperly translocated ribosomes. Back-translocation proceeds from a post-translocation (POST) complex to a pre-translocation (PRE) complex, thus giving elongation factor G a second chance to translocate the tRNAs correctly. Binds to ribosomes in a GTP-dependent manner. The chain is Elongation factor 4 from Methylobacillus flagellatus (strain ATCC 51484 / DSM 6875 / VKM B-1610 / KT).